Here is a 469-residue protein sequence, read N- to C-terminus: Argininosuccinate lyase (469 aa).

The protein belongs to the lyase 1 family. Argininosuccinate lyase subfamily.

Its subcellular location is the cytoplasm. It catalyses the reaction 2-(N(omega)-L-arginino)succinate = fumarate + L-arginine. Its pathway is amino-acid biosynthesis; L-arginine biosynthesis; L-arginine from L-ornithine and carbamoyl phosphate: step 3/3. This Mycolicibacterium smegmatis (strain ATCC 700084 / mc(2)155) (Mycobacterium smegmatis) protein is Argininosuccinate lyase.